Consider the following 251-residue polypeptide: uncharacterized protein (251 aa).

2 disordered regions span residues 1-92 (MGRP…PGSA) and 137-251 (KPTP…LRTH). Positions 69–92 (AEGAPALLGGSPSSGSPGHPPGSA) are enriched in low complexity. Positions 155–172 (SESSWQLPQLPAGSTSGS) are enriched in polar residues.

This is an uncharacterized protein from Homo sapiens (Human).